A 340-amino-acid chain; its full sequence is Immunoglobulin-binding protein 1 (340 aa).

Positions leucine 47 to aspartate 61 constitute a UIM domain. The interval arginine 99 to glycine 203 is interaction with PPP2CA. Disordered regions lie at residues aspartate 221–lysine 242 and leucine 281–glycine 340. Positions arginine 226–serine 291 are interaction with MID1. Lysine 242 carries the post-translational modification N6-acetyllysine. Residues alanine 292 to glutamine 301 are compositionally biased toward low complexity. Residues glutamate 302 to glutamate 312 show a composition bias toward acidic residues. Residues glutamate 313 to proline 330 are compositionally biased toward basic and acidic residues.

It belongs to the IGBP1/TAP42 family. In terms of assembly, interacts with partially folded PPP2CA, but not with the fully active protein. Interacts with PPP2CB, and with PP4 and PP6. Interacts with MID1 and MID2. Interacts with ubiquitin. Phosphorylated. In terms of processing, monoubiquitination by MID1 triggers calpain-mediated cleavage and switches IGBP1 activity from protective to destructive.

It is found in the cytoplasm. In terms of biological role, associated to surface IgM-receptor; may be involved in signal transduction. Involved in regulation of the catalytic activity of the phosphatases PP2A, PP4 and PP6 by protecting their partially folded catalytic subunits from degradative polyubiquitination until they associate with regulatory subunits. The sequence is that of Immunoglobulin-binding protein 1 (Igbp1) from Rattus norvegicus (Rat).